Reading from the N-terminus, the 964-residue chain is Activator of stress genes 1 (964 aa).

A DNA-binding region (zn(2)-C6 fungal-type) is located at residues 21-47 (CDECRKKKVKCDGQQPCIHCTVYSYEC). Positions 104–125 (ASTIPASNNPSKPRKYKTKSTR) are disordered. A Phosphoserine; by ATM or ATR modification is found at serine 166. Phosphoserine is present on serine 186. 3 stretches are compositionally biased toward polar residues: residues 190 to 201 (PVLSSNSKNSTP), 209 to 225 (KSDSNSASSNREQDSVD), and 733 to 759 (NNTPISENPLNEAQQQDQVSQGTTNMS). 3 disordered regions span residues 190-225 (PVLSSNSKNSTPDEFLPNMKSDSNSASSNREQDSVD), 733-764 (NNTPISENPLNEAQQQDQVSQGTTNMSNERDP), and 800-900 (NSAF…SPSY). The segment covering 800–896 (NSAFDFSSSK…NDFGIKIDNN (97 aa)) has biased composition (low complexity). Serine 963 bears the Phosphoserine mark.

It belongs to the ASG1 family.

The protein localises to the nucleus. Functionally, probable transcription factor involved in the stress response. In Saccharomyces cerevisiae (strain ATCC 204508 / S288c) (Baker's yeast), this protein is Activator of stress genes 1 (ASG1).